We begin with the raw amino-acid sequence, 145 residues long: Leptin (145 aa).

Cys-95 and Cys-145 form a disulfide bridge.

It belongs to the leptin family.

Its subcellular location is the secreted. In terms of biological role, key player in the regulation of energy balance and body weight control. Once released into the circulation, has central and peripheral effects by binding LEPR, found in many tissues, which results in the activation of several major signaling pathways. The chain is Leptin (LEP) from Meleagris gallopavo (Wild turkey).